A 390-amino-acid polypeptide reads, in one-letter code: GTPase Obg (390 aa).

The Obg domain maps to 1-159; the sequence is MKFIDESLIR…RDLLLELMLL (159 aa). Positions 160–333 constitute an OBG-type G domain; it reads ADVGMLGLPN…LCRDIMDFII (174 aa). GTP contacts are provided by residues 166 to 173, 191 to 195, 213 to 216, 283 to 286, and 314 to 316; these read GLPNAGKS, FTTLV, DIPG, NKID, and SAA. Mg(2+)-binding residues include Ser-173 and Thr-193.

Belongs to the TRAFAC class OBG-HflX-like GTPase superfamily. OBG GTPase family. Monomer. It depends on Mg(2+) as a cofactor.

Its subcellular location is the cytoplasm. In terms of biological role, an essential GTPase which binds GTP, GDP and possibly (p)ppGpp with moderate affinity, with high nucleotide exchange rates and a fairly low GTP hydrolysis rate. Plays a role in control of the cell cycle, stress response, ribosome biogenesis and in those bacteria that undergo differentiation, in morphogenesis control. This is GTPase Obg from Haemophilus influenzae (strain 86-028NP).